The following is a 2179-amino-acid chain: Probable inactive serine/threonine-protein kinase lvsG (2179 aa).

Residues 100–167 (DHDLNKNKNN…TSISLNDLNS (68 aa)) are disordered. Low complexity-rich tracts occupy residues 106–121 (NKNN…NNSG) and 141–159 (LSPS…LSTS). A WD 1 repeat occupies 216 to 256 (LYERSLKTSQQQQQQQQQQFKFQPNETLSLWEYFDEINSPP). Disordered regions lie at residues 281–300 (LDNK…NSQS), 523–556 (DNDN…TVGW), 589–621 (DSMG…NSGK), 778–801 (KSLK…QPQF), 844–959 (NNHH…NKPS), 1033–1055 (AQQQ…SKQL), 1079–1153 (GISK…STTD), 1339–1362 (NHSN…KNGS), and 1785–1807 (TTTT…PNSL). The 339-residue stretch at 463-801 (YHQPLENQFE…QQQTQQQPQF (339 aa)) folds into the BEACH domain. Positions 534-548 (NSSSSNNNNNNNNED) are enriched in low complexity. Residues 590–602 (SMGGGIGSIGSTG) show a composition bias toward gly residues. Composition is skewed to low complexity over residues 783 to 800 (QRQQ…QQPQ), 853 to 943 (NSNI…GVNN), 1033 to 1047 (AQQQ…QQQA), and 1084 to 1098 (TTNA…TNSN). Residues 1021–1049 (LQQQLQQQQQQQAQQQQSQQQSQQQQANS) adopt a coiled-coil conformation. Residues 1064–1400 (ESMIKKYSNG…VNELLSSSLF (337 aa)) form the Protein kinase domain. A compositionally biased stretch (polar residues) spans 1099–1122 (MGDSIGNNITSPPSPTSLKDSSSI). Residues 1123–1134 (QQQQQQQQQQQQ) are compositionally biased toward low complexity. Residues 1135–1153 (NSESTRPITPPNVSNSTTD) are compositionally biased toward polar residues. 2 stretches are compositionally biased toward low complexity: residues 1339–1360 (NHSN…NNKN) and 1785–1801 (TTTT…NNNN). WD repeat units follow at residues 1864–1903 (EHNA…SLTT), 1906–1942 (QHMH…KVNV), 1945–1983 (EPTG…LTHE), 2007–2048 (SNSN…ILEQ), 2052–2089 (HHDS…PIIS), and 2149–2179 (PKQS…KICQ).

The protein belongs to the protein kinase superfamily. Ser/Thr protein kinase family.

In Dictyostelium discoideum (Social amoeba), this protein is Probable inactive serine/threonine-protein kinase lvsG (lvsG).